Here is a 91-residue protein sequence, read N- to C-terminus: Small ribosomal subunit protein bS20 (91 aa).

Residues 1–23 (MANTPSAKKRAKQAEKRRSHNAS) form a disordered region. Residues 7–20 (AKKRAKQAEKRRSH) are compositionally biased toward basic residues.

The protein belongs to the bacterial ribosomal protein bS20 family.

Its function is as follows. Binds directly to 16S ribosomal RNA. This chain is Small ribosomal subunit protein bS20, found in Pseudomonas aeruginosa (strain LESB58).